The chain runs to 687 residues: Macrolide export ATP-binding/permease protein MacB (687 aa).

In terms of domain architecture, ABC transporter spans 6-244 (LKLAAVTRRF…LAEAGVDAAE (239 aa)). 42–49 (GASGSGKS) contributes to the ATP binding site. Over residues 246–256 (AEASEAAVGES) the composition is skewed to low complexity. Residues 246–281 (AEASEAAVGESPTRNRHDTPAPPAAVDTDPHVDTGT) are disordered. A run of 4 helical transmembrane segments spans residues 312–332 (LLTM…VAIG), 560–580 (LTLL…IGVM), 617–637 (LVCL…GALF), and 650–670 (AGAI…FGFM).

This sequence belongs to the ABC transporter superfamily. Macrolide exporter (TC 3.A.1.122) family. As to quaternary structure, homodimer.

The protein localises to the cell inner membrane. In terms of biological role, non-canonical ABC transporter that contains transmembrane domains (TMD), which form a pore in the inner membrane, and an ATP-binding domain (NBD), which is responsible for energy generation. Confers resistance against macrolides. The polypeptide is Macrolide export ATP-binding/permease protein MacB (Burkholderia lata (strain ATCC 17760 / DSM 23089 / LMG 22485 / NCIMB 9086 / R18194 / 383)).